The following is a 317-amino-acid chain: Pseudouridine-5'-phosphate glycosidase 1 (317 aa).

The active-site Proton donor is E40. 2 residues coordinate substrate: K101 and V121. A Mn(2+)-binding site is contributed by D153. 155–157 lines the substrate pocket; that stretch reads SAD. K174 serves as the catalytic Nucleophile.

It belongs to the pseudouridine-5'-phosphate glycosidase family. Homotrimer. Mn(2+) serves as cofactor.

The catalysed reaction is D-ribose 5-phosphate + uracil = psi-UMP + H2O. In terms of biological role, catalyzes the reversible cleavage of pseudouridine 5'-phosphate (PsiMP) to ribose 5-phosphate and uracil. Functions biologically in the cleavage direction, as part of a pseudouridine degradation pathway. This is Pseudouridine-5'-phosphate glycosidase 1 from Rhizobium johnstonii (strain DSM 114642 / LMG 32736 / 3841) (Rhizobium leguminosarum bv. viciae).